The primary structure comprises 348 residues: Histidinol-phosphate aminotransferase (348 aa).

Lys210 bears the N6-(pyridoxal phosphate)lysine mark.

The protein belongs to the class-II pyridoxal-phosphate-dependent aminotransferase family. Histidinol-phosphate aminotransferase subfamily. Homodimer. The cofactor is pyridoxal 5'-phosphate.

The catalysed reaction is L-histidinol phosphate + 2-oxoglutarate = 3-(imidazol-4-yl)-2-oxopropyl phosphate + L-glutamate. It participates in amino-acid biosynthesis; L-histidine biosynthesis; L-histidine from 5-phospho-alpha-D-ribose 1-diphosphate: step 7/9. In Cytophaga hutchinsonii (strain ATCC 33406 / DSM 1761 / CIP 103989 / NBRC 15051 / NCIMB 9469 / D465), this protein is Histidinol-phosphate aminotransferase.